We begin with the raw amino-acid sequence, 104 residues long: MAARSLSGAVKSLCSAASGSLSCSIVLRRSYVATSQNVTAAGLSKGGSTRVMVGKMEQRGLDQEAESAWGPDPVTGYYRPSNRAAEIDPAELRELLLKNKAKSF.

Residues 1–31 constitute a mitochondrion transit peptide; it reads MAARSLSGAVKSLCSAASGSLSCSIVLRRSY.

The protein belongs to the LEA type 3 family.

The protein localises to the mitochondrion. This chain is Late embryogenis abundant protein 41, found in Arabidopsis thaliana (Mouse-ear cress).